A 344-amino-acid chain; its full sequence is Nuclear distribution protein nudE-like 1-B (344 aa).

Positions 26–189 form a coiled coil; sequence YKKSCHDAQE…ELAVRERTSD (164 aa).

This sequence belongs to the nudE family. Post-translationally, phosphorylated in mitosis.

It localises to the cytoplasm. It is found in the cytoskeleton. The protein resides in the microtubule organizing center. The protein localises to the centrosome. Its subcellular location is the spindle. Its function is as follows. Required for organization of the cellular microtubule array and microtubule anchoring at the centrosome. Positively regulates the activity of the minus-end directed microtubule motor protein dynein. May enhance dynein-mediated microtubule sliding by targeting dynein to the microtubule plus end. This is Nuclear distribution protein nudE-like 1-B (ndel1b) from Danio rerio (Zebrafish).